A 462-amino-acid polypeptide reads, in one-letter code: MQEGKISQIIGPVVDVDFPEGQLPAILDALSIAKPDGTKIVLETQQHLGEERVRTVAMESTDGLIRGMAVENTGRPIQAPVGEGVLGRMLNVVGDPIDGRGPVDAKKTYSIHRSAPKFEDLSTKAEMFETGIKVIDLLEPYSRGGKTGLFGGAGVGKTVLIMELINNIAKQQSGYSVFAGVGERTREGNDLWHEMMESGVIDKTALVFGQMNEPPGARARVALTGLSIAEYFRDEENRDVLLFIDNIFRFTQAGSEVSALLGRMPSAVGYQPTLATEMGELQDRITSTKNGSVTSVQAIYVPADDLTDPAPATAFAHLDATTVLSRSIAELGIYPAVDPLDSTSRILDPNIVGDDHYDTAQAVKMILQRYKDLQDIIAILGMDELSDEDKLVVSRARKVQRFLSQPFFVAEAFTGLSGKYVKLEETIKGFKEIIAGKHDNLPENAFYLVGTIEEAIEKAKTL.

Residue 151–158 (GGAGVGKT) participates in ATP binding.

This sequence belongs to the ATPase alpha/beta chains family. In terms of assembly, F-type ATPases have 2 components, CF(1) - the catalytic core - and CF(0) - the membrane proton channel. CF(1) has five subunits: alpha(3), beta(3), gamma(1), delta(1), epsilon(1). CF(0) has four main subunits: a(1), b(1), b'(1) and c(9-12).

The protein localises to the cell inner membrane. It carries out the reaction ATP + H2O + 4 H(+)(in) = ADP + phosphate + 5 H(+)(out). In terms of biological role, produces ATP from ADP in the presence of a proton gradient across the membrane. The catalytic sites are hosted primarily by the beta subunits. This is ATP synthase subunit beta from Chlorobium phaeovibrioides (strain DSM 265 / 1930) (Prosthecochloris vibrioformis (strain DSM 265)).